Consider the following 128-residue polypeptide: 3-aminoacrylate deaminase RutC (128 aa).

This sequence belongs to the RutC family.

The enzyme catalyses (Z)-3-aminoacrylate + H2O + H(+) = 3-oxopropanoate + NH4(+). Functionally, involved in pyrimidine catabolism. Catalyzes the deamination of 3-aminoacrylate to malonic semialdehyde, a reaction that can also occur spontaneously. RutC may facilitate the reaction and modulate the metabolic fitness, rather than catalyzing essential functions. This is 3-aminoacrylate deaminase RutC from Pantoea ananatis (strain LMG 20103).